Reading from the N-terminus, the 202-residue chain is Small ribosomal subunit protein uS4c (202 aa).

One can recognise an S4 RNA-binding domain in the interval 90–159 (MRLDNIIFRL…TKNYEFSQTY (70 aa)).

This sequence belongs to the universal ribosomal protein uS4 family. In terms of assembly, part of the 30S ribosomal subunit. Contacts protein S5. The interaction surface between S4 and S5 is involved in control of translational fidelity.

It is found in the plastid. The protein resides in the chloroplast. Functionally, one of the primary rRNA binding proteins, it binds directly to 16S rRNA where it nucleates assembly of the body of the 30S subunit. In terms of biological role, with S5 and S12 plays an important role in translational accuracy. The sequence is that of Small ribosomal subunit protein uS4c (rps4) from Huperzia lucidula (Shining clubmoss).